The primary structure comprises 417 residues: MSENLIIFNARIVTPTGTSARKGAEMGQLRIIENGTVEVTKGIITYVGESRGEDRDGYYQHYWHYNARGHCLLPGFVDSHTHFVFGGERSEEFSWRLKGESYMSIMERGGGIASTVKATRQMNFLKLRSAAEGFLKKMSAMGVTTVEGKSGYGLDRETELLQLKIMRSLNNDEHKRIDIVSTFLGAHALPEEYKGRGDEYIDFLIREMLPVIRENELAECCDVFCEQGVFSVEQSRRLLQAAKEQGFLLKLHADEIVSFGGAELAAELGALSADHLLQASDAGIRAMADAGVVATLLPLTAFALKEPYARGREMIDAGCAVALATDLNPGSCFSGSIPLTIALACIYMKLSIEETITALTLNGAAALHRADRIGSIEVGKQGDFVILNSDNYHILPYYVGMNCVIMTIKGGMLYPVN.

The Fe(3+) site is built by histidine 80 and histidine 82. Positions 80 and 82 each coordinate Zn(2+). Residues arginine 89, tyrosine 152, and histidine 187 each coordinate 4-imidazolone-5-propanoate. Residue tyrosine 152 coordinates N-formimidoyl-L-glutamate. A Fe(3+)-binding site is contributed by histidine 252. Histidine 252 lines the Zn(2+) pocket. Glutamate 255 lines the 4-imidazolone-5-propanoate pocket. Residue aspartate 326 coordinates Fe(3+). Position 326 (aspartate 326) interacts with Zn(2+). Asparagine 328 and glycine 330 together coordinate N-formimidoyl-L-glutamate. Serine 331 contacts 4-imidazolone-5-propanoate.

The protein belongs to the metallo-dependent hydrolases superfamily. HutI family. Requires Zn(2+) as cofactor. Fe(3+) serves as cofactor.

It localises to the cytoplasm. The catalysed reaction is 4-imidazolone-5-propanoate + H2O = N-formimidoyl-L-glutamate. The protein operates within amino-acid degradation; L-histidine degradation into L-glutamate; N-formimidoyl-L-glutamate from L-histidine: step 3/3. Functionally, catalyzes the hydrolytic cleavage of the carbon-nitrogen bond in imidazolone-5-propanoate to yield N-formimidoyl-L-glutamate. It is the third step in the universal histidine degradation pathway. This Bacteroides thetaiotaomicron (strain ATCC 29148 / DSM 2079 / JCM 5827 / CCUG 10774 / NCTC 10582 / VPI-5482 / E50) protein is Imidazolonepropionase.